Consider the following 314-residue polypeptide: MGEIRSFLLVTIALMMGREIWALENSKCLLEQERLRAQVQQLETRVKQQQARIAQLMHEKEVQLLDKGQEDNFFDLGGKRQYADCSEIYNDGFKQSGFYKIKPHQSQAIFSVYCDMSDGGGWTVIQRRSDGRENFNRCWNDYENGFGNFVQNNGEYWLGNKNINLLTMQGDYTLKIDLTDFEKNSRFAQYKHFKVGDKKSFYELNFGEYSGTAGDSLSGTYHPEMQWWASHQRMKFSTRDRDNDNYKGNCAEEEQSGWWFNRCHSANLNGVYYQGPYTAETDNGVVWYTWHGWWYSLKSVVMKIRPNDFIPNVI.

A signal peptide spans methionine 1 to alanine 22. Residues asparagine 25–glutamate 59 adopt a coiled-coil conformation. The 233-residue stretch at leucine 76–aspartate 308 folds into the Fibrinogen C-terminal domain. 2 disulfides stabilise this stretch: cysteine 85–cysteine 114 and cysteine 250–cysteine 263.

As to quaternary structure, homodimer. Interacts (via the Fibrinogen C-terminal domain) with LAG3 (via Ig-like domains 1 and 2).

Its subcellular location is the secreted. Immune suppressive molecule that inhibits antigen-specific T-cell activation by acting as a major ligand of LAG3. Responsible for LAG3 T-cell inhibitory function. Binds LAG3 independently from MHC class II (MHC-II). Secreted by, and promotes growth of, hepatocytes. This chain is Fibrinogen-like protein 1, found in Mesocricetus auratus (Golden hamster).